The following is a 387-amino-acid chain: Succinyl-diaminopimelate desuccinylase (387 aa).

H74 provides a ligand contact to Zn(2+). D76 is an active-site residue. D107 contacts Zn(2+). The active-site Proton acceptor is the E142. 3 residues coordinate Zn(2+): E143, E171, and H360.

The protein belongs to the peptidase M20A family. DapE subfamily. As to quaternary structure, homodimer. The cofactor is Zn(2+). Requires Co(2+) as cofactor.

It carries out the reaction N-succinyl-(2S,6S)-2,6-diaminopimelate + H2O = (2S,6S)-2,6-diaminopimelate + succinate. It participates in amino-acid biosynthesis; L-lysine biosynthesis via DAP pathway; LL-2,6-diaminopimelate from (S)-tetrahydrodipicolinate (succinylase route): step 3/3. Its function is as follows. Catalyzes the hydrolysis of N-succinyl-L,L-diaminopimelic acid (SDAP), forming succinate and LL-2,6-diaminopimelate (DAP), an intermediate involved in the bacterial biosynthesis of lysine and meso-diaminopimelic acid, an essential component of bacterial cell walls. In Rhodopseudomonas palustris (strain ATCC BAA-98 / CGA009), this protein is Succinyl-diaminopimelate desuccinylase.